The sequence spans 217 residues: Proteasome subunit beta type-9 (217 aa).

Residues Met1–Gly18 constitute a propeptide, removed in mature form. Thr19 functions as the Nucleophile in the catalytic mechanism.

It belongs to the peptidase T1B family. As to quaternary structure, the 26S proteasome consists of a 20S proteasome core and two 19S regulatory subunits. The 20S proteasome core is composed of 28 subunits that are arranged in four stacked rings, resulting in a barrel-shaped structure. The two end rings are each formed by seven alpha subunits, and the two central rings are each formed by seven beta subunits. The catalytic chamber with the active sites is on the inside of the barrel. Component of the immunoproteasome, where it displaces the equivalent housekeeping subunit PSMB6. Post-translationally, autocleaved. The resulting N-terminal Thr residue of the mature subunit is responsible for the nucleophile proteolytic activity.

It is found in the cytoplasm. It localises to the nucleus. The enzyme catalyses Cleavage of peptide bonds with very broad specificity.. In terms of biological role, the proteasome is a multicatalytic proteinase complex which is characterized by its ability to cleave peptides with Arg, Phe, Tyr, Leu, and Glu adjacent to the leaving group at neutral or slightly basic pH. The proteasome has an ATP-dependent proteolytic activity. This subunit is involved in antigen processing to generate class I binding peptides. The polypeptide is Proteasome subunit beta type-9 (psmb9) (Oryzias latipes (Japanese rice fish)).